The chain runs to 388 residues: Fetuin-B (388 aa).

Residues 1 to 18 form the signal peptide; it reads MGLLRLLVLCTLAACCMA. 2 Cystatin fetuin-B-type domains span residues 28–141 and 152–264; these read QRPL…YNCT and TTCP…VTCE. N-linked (GlcNAc...) asparagine glycosylation occurs at N40. 5 disulfides stabilise this stretch: C96-C107, C120-C140, C154-C157, C217-C224, and C237-C263. Residue N139 is glycosylated (N-linked (GlcNAc...) asparagine). Disordered stretches follow at residues 270–343 and 367–388; these read AQVP…PQGD and KEQRSAECPGPEKENNPLVLPP. The segment covering 279-300 has biased composition (polar residues); that stretch reads AVTQGPQKLPQKNTAPTSSPSV. O-linked (GalNAc...) threonine glycans are attached at residues T292 and T295. Phosphoserine is present on S321. The span at 367 to 381 shows a compositional bias: basic and acidic residues; the sequence is KEQRSAECPGPEKEN.

Belongs to the fetuin family. Liver, lung and tongue.

It localises to the secreted. In terms of biological role, protease inhibitor required for egg fertilization. Required to prevent premature zona pellucida hardening before fertilization, probably by inhibiting the protease activity of ASTL, a protease that mediates the cleavage of ZP2 and triggers zona pellucida hardening. The polypeptide is Fetuin-B (Fetub) (Mus musculus (Mouse)).